A 372-amino-acid chain; its full sequence is MATGTIVIKIGSSSLTDGNGALSTERLRGHVEAICELRHQGINVIVVTSGAVAAGFTLIGYHQRPKSISQKQAAAAVGQSLLMQAYMDAFRLHGYTAAQLLLTRADFADPARFSNISQTLRELLKRGAIPVINENDSTSVDELTFGDNDRLSALVSGIIHADMLCLYTDVNGVYDQNPNDSPNAKKYHYLASVPEALLDRVSADTSAVGTGGMKSKLLAAKTAIELGTNVFIGNGKGRETFTDVLLGKGDGTYLGPFTNKTMSTTKQWIVFHSEPAGSIEIDSGASTALLKRGKSLLPAGVLSAKGDFSAGDIIEVFFNNRPIGKGKTNFSKHELELIKGLNSEEALSLTKRSKKAVIHRDFWVATKKECSY.

K9 provides a ligand contact to ATP. S49, D136, and N148 together coordinate substrate. Residues 168–169 (TD) and 210–216 (TGGMKSK) contribute to the ATP site. The region spanning 276 to 353 (AGSIEIDSGA…EEALSLTKRS (78 aa)) is the PUA domain.

This sequence belongs to the glutamate 5-kinase family.

It localises to the cytoplasm. It carries out the reaction L-glutamate + ATP = L-glutamyl 5-phosphate + ADP. The protein operates within amino-acid biosynthesis; L-proline biosynthesis; L-glutamate 5-semialdehyde from L-glutamate: step 1/2. Functionally, catalyzes the transfer of a phosphate group to glutamate to form L-glutamate 5-phosphate. The protein is Glutamate 5-kinase of Shouchella clausii (strain KSM-K16) (Alkalihalobacillus clausii).